We begin with the raw amino-acid sequence, 202 residues long: Urease accessory protein UreE (202 aa).

The span at 171-188 (HHGHSHSHDHDHDHDHQH) shows a compositional bias: basic and acidic residues. The interval 171-202 (HHGHSHSHDHDHDHDHQHGPGCTHGHRGHDHH) is disordered.

It belongs to the UreE family.

It is found in the cytoplasm. Functionally, involved in urease metallocenter assembly. Binds nickel. Probably functions as a nickel donor during metallocenter assembly. The polypeptide is Urease accessory protein UreE (Burkholderia ambifaria (strain ATCC BAA-244 / DSM 16087 / CCUG 44356 / LMG 19182 / AMMD) (Burkholderia cepacia (strain AMMD))).